A 106-amino-acid chain; its full sequence is Large ribosomal subunit protein uL23 (106 aa).

Belongs to the universal ribosomal protein uL23 family. As to quaternary structure, part of the 50S ribosomal subunit. Contacts protein L29, and trigger factor when it is bound to the ribosome.

Its function is as follows. One of the early assembly proteins it binds 23S rRNA. One of the proteins that surrounds the polypeptide exit tunnel on the outside of the ribosome. Forms the main docking site for trigger factor binding to the ribosome. In Neisseria gonorrhoeae (strain ATCC 700825 / FA 1090), this protein is Large ribosomal subunit protein uL23.